Reading from the N-terminus, the 386-residue chain is D-galactosamine-6-phosphate deaminase AgaS (386 aa).

SIS domains follow at residues 59 to 217 and 222 to 366; these read LTPI…CIEM and LTER…PDNP.

This sequence belongs to the SIS family. AgaS subfamily.

The protein localises to the cytoplasm. The enzyme catalyses D-galactosamine 6-phosphate + H2O = D-tagatopyranose 1-phosphate + NH4(+). The catalysed reaction is alpha-D-glucosamine 6-phosphate + H2O = beta-D-fructose 6-phosphate + NH4(+). Involved in the pathway of N-acetyl-D-galactosamine degradation. Catalyzes the conversion of D-galactosamine 6-phosphate (GalN-6-P) to D-tagatofuranose 6-phosphate (Tag-6-P). It can also catalyze the conversion of D-glucosamine 6-phosphate. This is D-galactosamine-6-phosphate deaminase AgaS from Shewanella sp. (strain ANA-3).